The following is a 362-amino-acid chain: Phosphoserine aminotransferase (362 aa).

Arginine 43 is an L-glutamate binding site. Pyridoxal 5'-phosphate contacts are provided by residues 77-78 (AT), tryptophan 103, threonine 153, aspartate 173, and glutamine 196. An N6-(pyridoxal phosphate)lysine modification is found at lysine 197. Residue 238-239 (NT) coordinates pyridoxal 5'-phosphate.

It belongs to the class-V pyridoxal-phosphate-dependent aminotransferase family. SerC subfamily. As to quaternary structure, homodimer. It depends on pyridoxal 5'-phosphate as a cofactor.

The protein resides in the cytoplasm. It catalyses the reaction O-phospho-L-serine + 2-oxoglutarate = 3-phosphooxypyruvate + L-glutamate. The catalysed reaction is 4-(phosphooxy)-L-threonine + 2-oxoglutarate = (R)-3-hydroxy-2-oxo-4-phosphooxybutanoate + L-glutamate. The protein operates within amino-acid biosynthesis; L-serine biosynthesis; L-serine from 3-phospho-D-glycerate: step 2/3. It participates in cofactor biosynthesis; pyridoxine 5'-phosphate biosynthesis; pyridoxine 5'-phosphate from D-erythrose 4-phosphate: step 3/5. In terms of biological role, catalyzes the reversible conversion of 3-phosphohydroxypyruvate to phosphoserine and of 3-hydroxy-2-oxo-4-phosphonooxybutanoate to phosphohydroxythreonine. This is Phosphoserine aminotransferase from Xylella fastidiosa (strain Temecula1 / ATCC 700964).